A 420-amino-acid chain; its full sequence is Serine hydroxymethyltransferase (420 aa).

Residues Leu-121 and 125–127 (GHL) contribute to the (6S)-5,6,7,8-tetrahydrofolate site. Position 230 is an N6-(pyridoxal phosphate)lysine (Lys-230).

This sequence belongs to the SHMT family. Homodimer. It depends on pyridoxal 5'-phosphate as a cofactor.

Its subcellular location is the cytoplasm. The enzyme catalyses (6R)-5,10-methylene-5,6,7,8-tetrahydrofolate + glycine + H2O = (6S)-5,6,7,8-tetrahydrofolate + L-serine. The protein operates within one-carbon metabolism; tetrahydrofolate interconversion. It functions in the pathway amino-acid biosynthesis; glycine biosynthesis; glycine from L-serine: step 1/1. Catalyzes the reversible interconversion of serine and glycine with tetrahydrofolate (THF) serving as the one-carbon carrier. This reaction serves as the major source of one-carbon groups required for the biosynthesis of purines, thymidylate, methionine, and other important biomolecules. Also exhibits THF-independent aldolase activity toward beta-hydroxyamino acids, producing glycine and aldehydes, via a retro-aldol mechanism. In Streptomyces avermitilis (strain ATCC 31267 / DSM 46492 / JCM 5070 / NBRC 14893 / NCIMB 12804 / NRRL 8165 / MA-4680), this protein is Serine hydroxymethyltransferase.